Reading from the N-terminus, the 335-residue chain is Ketol-acid reductoisomerase (NADP(+)) (335 aa).

Residues 5–185 (SKIYTDKDSN…GATRAGVIPT (181 aa)) enclose the KARI N-terminal Rossmann domain. NADP(+) is bound by residues 28–31 (YGSQ), Ser-56, and 86–89 (DMVQ). Residue His-111 is part of the active site. Residue Gly-137 participates in NADP(+) binding. The KARI C-terminal knotted domain occupies 186-331 (TFKEETETDL…NQLKDLIQKG (146 aa)). Mg(2+)-binding residues include Asp-194, Glu-198, Glu-230, and Glu-234. Ser-255 is a substrate binding site.

It belongs to the ketol-acid reductoisomerase family. It depends on Mg(2+) as a cofactor.

It carries out the reaction (2R)-2,3-dihydroxy-3-methylbutanoate + NADP(+) = (2S)-2-acetolactate + NADPH + H(+). The enzyme catalyses (2R,3R)-2,3-dihydroxy-3-methylpentanoate + NADP(+) = (S)-2-ethyl-2-hydroxy-3-oxobutanoate + NADPH + H(+). It functions in the pathway amino-acid biosynthesis; L-isoleucine biosynthesis; L-isoleucine from 2-oxobutanoate: step 2/4. It participates in amino-acid biosynthesis; L-valine biosynthesis; L-valine from pyruvate: step 2/4. Functionally, involved in the biosynthesis of branched-chain amino acids (BCAA). Catalyzes an alkyl-migration followed by a ketol-acid reduction of (S)-2-acetolactate (S2AL) to yield (R)-2,3-dihydroxy-isovalerate. In the isomerase reaction, S2AL is rearranged via a Mg-dependent methyl migration to produce 3-hydroxy-3-methyl-2-ketobutyrate (HMKB). In the reductase reaction, this 2-ketoacid undergoes a metal-dependent reduction by NADPH to yield (R)-2,3-dihydroxy-isovalerate. The chain is Ketol-acid reductoisomerase (NADP(+)) from Saccharolobus islandicus (strain L.S.2.15 / Lassen #1) (Sulfolobus islandicus).